Consider the following 310-residue polypeptide: Glutaminase 1 (310 aa).

The substrate site is built by serine 66, asparagine 117, glutamate 161, asparagine 168, tyrosine 192, tyrosine 244, and valine 262. Lysine 294 carries the post-translational modification N6-acetyllysine.

This sequence belongs to the glutaminase family. In terms of assembly, homotetramer.

The enzyme catalyses L-glutamine + H2O = L-glutamate + NH4(+). In Escherichia coli O157:H7, this protein is Glutaminase 1.